A 200-amino-acid polypeptide reads, in one-letter code: MARYRGPKQKIARRFKEPIFGPSKALERKPYPPGQHGQSRRRRESEYAVQLKEKQKTKYTYGLLERQFKNLFDKASRMQGVTGEKLLILLEARLDNTVFRMGIARTRRQARQFVAHRHIMVNDEVVDIPSYEMSPDDVVSVKPSSQDLEVIQTNVEHRQRTFSWLEMDRQEMKGKFIDYPNREEIPENIDEQLIVELYSK.

A compositionally biased stretch (basic residues) spans 1-13 (MARYRGPKQKIAR). The segment at 1–44 (MARYRGPKQKIARRFKEPIFGPSKALERKPYPPGQHGQSRRRRE) is disordered. Residues 92-154 (ARLDNTVFRM…SQDLEVIQTN (63 aa)) form the S4 RNA-binding domain.

It belongs to the universal ribosomal protein uS4 family. In terms of assembly, part of the 30S ribosomal subunit. Contacts protein S5. The interaction surface between S4 and S5 is involved in control of translational fidelity.

One of the primary rRNA binding proteins, it binds directly to 16S rRNA where it nucleates assembly of the body of the 30S subunit. Functionally, with S5 and S12 plays an important role in translational accuracy. In Salinibacter ruber (strain DSM 13855 / M31), this protein is Small ribosomal subunit protein uS4.